Reading from the N-terminus, the 269-residue chain is 2' cyclic ADP-D-ribose synthase AbTIR (269 aa).

The stretch at 31-99 (LKTKLSEISR…KQQKDEIEHQ (69 aa)) forms a coiled coil. A TIR domain is found at 133-266 (PEYDLFISHA…EIAHQLADVI (134 aa)). NAD(+) is bound by residues S143, K172, and K202. Residue E208 is part of the active site. K245 is an NAD(+) binding site.

As to quaternary structure, homodimer. In the presence of NAD(+) analog 8-amino-isoquinoline adenine dinucleotide (3AD) forms filaments with 3AD between monomers; conformational changes occur upon 3AD binding.

The catalysed reaction is NAD(+) = 2'cADPR + nicotinamide + H(+). The enzyme catalyses NAD(+) + H2O = ADP-D-ribose + nicotinamide + H(+). It carries out the reaction NADP(+) + H2O = ADP-D-ribose 2'-phosphate + nicotinamide + H(+). Its function is as follows. NAD(+) hydrolase (NADase) that catalyzes cleavage of NAD(+) into ADP-D-ribose (ADPR) and nicotinamide. In addition to ADPR, also generates a cyclization variant of cyclic ADPR (cADPR), termed 2'cADPR (v-cADPR). Cleaves NADP(+), but does not cyclize the product. This chain is 2' cyclic ADP-D-ribose synthase AbTIR, found in Acinetobacter baumannii (strain 1295743).